Here is a 215-residue protein sequence, read N- to C-terminus: Probable transaldolase (215 aa).

The active-site Schiff-base intermediate with substrate is Lys83.

The protein belongs to the transaldolase family. Type 3B subfamily.

It localises to the cytoplasm. It catalyses the reaction D-sedoheptulose 7-phosphate + D-glyceraldehyde 3-phosphate = D-erythrose 4-phosphate + beta-D-fructose 6-phosphate. It functions in the pathway carbohydrate degradation; pentose phosphate pathway; D-glyceraldehyde 3-phosphate and beta-D-fructose 6-phosphate from D-ribose 5-phosphate and D-xylulose 5-phosphate (non-oxidative stage): step 2/3. Functionally, transaldolase is important for the balance of metabolites in the pentose-phosphate pathway. In Methanococcus vannielii (strain ATCC 35089 / DSM 1224 / JCM 13029 / OCM 148 / SB), this protein is Probable transaldolase.